We begin with the raw amino-acid sequence, 407 residues long: Substance-P receptor (407 aa).

The Extracellular segment spans residues 1 to 31 (MDNVLPVDSDLFPNISTNTSEPNQFVQPAWQ). 2 N-linked (GlcNAc...) asparagine glycosylation sites follow: Asn14 and Asn18. The helical transmembrane segment at 32–54 (IVLWAAAYTVIVVTSVVGNVVVM) threads the bilayer. The Cytoplasmic portion of the chain corresponds to 55–64 (WIILAHKRMR). A helical transmembrane segment spans residues 65-86 (TVTNYFLVNLAFAEASMAAFNT). Residues 87-106 (VVNFTYAVHNEWYYGLFYCK) lie on the Extracellular side of the membrane. An intrachain disulfide couples Cys105 to Cys180. Residues 107 to 128 (FHNFFPIAAVFASIYSMTAVAF) form a helical membrane-spanning segment. Residues 129–148 (DRYMAIIHPLQPRLSATATK) lie on the Cytoplasmic side of the membrane. A helical transmembrane segment spans residues 149-169 (VVICVIWVLALLLAFPQGYYS). Residues 170–194 (TTETMPGRVVCMIEWPSHPDKIYEK) are Extracellular-facing. A helical transmembrane segment spans residues 195–219 (VYHICVTVLIYFLPLLVIGYAYTVV). Residues 220–248 (GITLWASEIPGDSSDRYHEQVSAKRKVVK) are Cytoplasmic-facing. The helical transmembrane segment at 249-270 (MMIVVVCTFAICWLPFHIFFLL) threads the bilayer. The Extracellular portion of the chain corresponds to 271–283 (PYINPDLYLKKFI). Residues 284–308 (QQVYLAIMWLAMSSTMYNPIIYCCL) traverse the membrane as a helical segment. Residues 309–407 (NDRFRLGFKH…SSSFYSNMLS (99 aa)) lie on the Cytoplasmic side of the membrane. Cys322 is lipidated: S-palmitoyl cysteine. The disordered stretch occupies residues 363–407 (GAHEEDPEEGPKATPSSLDLTSNGSSRSNSKTVTESSSFYSNMLS). Polar residues predominate over residues 376 to 407 (TPSSLDLTSNGSSRSNSKTVTESSSFYSNMLS).

Belongs to the G-protein coupled receptor 1 family. As to quaternary structure, interacts with ARRB1.

Its subcellular location is the cell membrane. In terms of biological role, this is a receptor for the tachykinin neuropeptide substance P. It is probably associated with G proteins that activate a phosphatidylinositol-calcium second messenger system. The rank order of affinity of this receptor to tachykinins is: substance P &gt; substance K &gt; neuromedin-K. The polypeptide is Substance-P receptor (TACR1) (Cavia porcellus (Guinea pig)).